Here is a 376-residue protein sequence, read N- to C-terminus: Branched-chain-amino-acid aminotransferase, cytosolic (376 aa).

An N6-(pyridoxal phosphate)lysine modification is found at lysine 202.

The protein belongs to the class-IV pyridoxal-phosphate-dependent aminotransferase family. It depends on pyridoxal 5'-phosphate as a cofactor.

It localises to the cytoplasm. It catalyses the reaction L-leucine + 2-oxoglutarate = 4-methyl-2-oxopentanoate + L-glutamate. It carries out the reaction L-isoleucine + 2-oxoglutarate = (S)-3-methyl-2-oxopentanoate + L-glutamate. The enzyme catalyses L-valine + 2-oxoglutarate = 3-methyl-2-oxobutanoate + L-glutamate. The catalysed reaction is a 2-oxocarboxylate + L-methionine = 4-methylsulfanyl-2-oxobutanoate + an L-alpha-amino acid. It participates in amino-acid biosynthesis; L-isoleucine biosynthesis; L-isoleucine from 2-oxobutanoate: step 4/4. Its pathway is amino-acid biosynthesis; L-leucine biosynthesis; L-leucine from 3-methyl-2-oxobutanoate: step 4/4. It functions in the pathway amino-acid biosynthesis; L-valine biosynthesis; L-valine from pyruvate: step 4/4. The protein operates within amino-acid biosynthesis; L-methionine biosynthesis via salvage pathway; L-methionine from S-methyl-5-thio-alpha-D-ribose 1-phosphate: step 6/6. In terms of biological role, cytoplasmic isozyme of branched-chain-amino-acid aminotransferase, which catalyzes the first reaction in the catabolism of the essential branched chain amino acids (BCAAs) leucine, isoleucine, and valine. Catalyzes the formation of methionine from 2-keto-4-methylthiobutyrate (KMTB) in the methionine salvage pathway primarily using BCAAs (leucine, isoleucine, and valine) as well as lysine and proline as the amino donors. Involved in cell cycle regulation. The polypeptide is Branched-chain-amino-acid aminotransferase, cytosolic (Saccharomyces cerevisiae (strain ATCC 204508 / S288c) (Baker's yeast)).